We begin with the raw amino-acid sequence, 65 residues long: Gallinacin-12 (65 aa).

An N-terminal signal peptide occupies residues 1 to 19 (MRNLCFVFIFISLLAHGST). 3 disulfide bridges follow: cysteine 25-cysteine 54, cysteine 32-cysteine 47, and cysteine 37-cysteine 55.

The protein belongs to the beta-defensin family. In terms of tissue distribution, expressed in the large intestine, kidney liver, gall bladder, testis, ovary and male and female reproductive tracts. Expressed in the ovarian stroma and the theca and granulosa layers of the ovarian follicle.

Its subcellular location is the secreted. The protein resides in the cytoplasmic granule. Its function is as follows. Has bactericidal activity. The polypeptide is Gallinacin-12 (GAL12) (Gallus gallus (Chicken)).